The following is a 48-amino-acid chain: Fimbrial assembly protein, serogroup F1 (48 aa).

This Dichelobacter nodosus (Bacteroides nodosus) protein is Fimbrial assembly protein, serogroup F1 (fimB).